The chain runs to 284 residues: Proteasome subunit pbs-5 (284 aa).

Positions 1–64 (MWGETFDDFE…AGKSMQFRKG (64 aa)) are cleaved as a propeptide — removed in mature form. Thr-65 serves as the catalytic Nucleophile.

It belongs to the peptidase T1B family. In terms of assembly, the 26S proteasome consists of a 20S proteasome core and two 19S regulatory subunits. The 20S proteasome core is composed of 28 subunits that are arranged in four stacked rings, resulting in a barrel-shaped structure. The two end rings are each formed by seven alpha subunits, and the two central rings are each formed by seven beta subunits. The catalytic chamber with the active sites is on the inside of the barrel.

The protein resides in the cytoplasm. It is found in the nucleus. The catalysed reaction is Cleavage of peptide bonds with very broad specificity.. Component of the 20S core proteasome complex involved in the proteolytic degradation of most intracellular proteins. This complex plays numerous essential roles within the cell by associating with different regulatory particles. Associated with two 19S regulatory particles, forms the 26S proteasome and thus participates in the ATP-dependent degradation of ubiquitinated proteins. The 26S proteasome plays a key role in the maintenance of protein homeostasis by removing misfolded or damaged proteins that could impair cellular functions, and by removing proteins whose functions are no longer required. In Caenorhabditis elegans, this protein is Proteasome subunit pbs-5.